A 234-amino-acid polypeptide reads, in one-letter code: Adenosine 5'-phosphosulfate reductase (234 aa).

[4Fe-4S] cluster is bound by residues cysteine 120, cysteine 121, cysteine 203, and cysteine 206. Cysteine 229 functions as the Nucleophile; cysteine thiosulfonate intermediate in the catalytic mechanism.

Belongs to the PAPS reductase family. CysH subfamily. It depends on [4Fe-4S] cluster as a cofactor.

The protein localises to the cytoplasm. It carries out the reaction [thioredoxin]-disulfide + sulfite + AMP + 2 H(+) = adenosine 5'-phosphosulfate + [thioredoxin]-dithiol. The protein operates within sulfur metabolism; hydrogen sulfide biosynthesis; sulfite from sulfate. Its function is as follows. Catalyzes the formation of sulfite from adenosine 5'-phosphosulfate (APS) using thioredoxin as an electron donor. This is Adenosine 5'-phosphosulfate reductase from Bacillus cereus (strain Q1).